The primary structure comprises 142 residues: Large ribosomal subunit protein uL11 (142 aa).

A disordered region spans residues 84-103 (AGVKSGSGRPNSDKVGTVTD).

The protein belongs to the universal ribosomal protein uL11 family. Part of the ribosomal stalk of the 50S ribosomal subunit. Interacts with L10 and the large rRNA to form the base of the stalk. L10 forms an elongated spine to which L12 dimers bind in a sequential fashion forming a multimeric L10(L12)X complex. In terms of processing, one or more lysine residues are methylated.

Functionally, forms part of the ribosomal stalk which helps the ribosome interact with GTP-bound translation factors. This chain is Large ribosomal subunit protein uL11, found in Aliivibrio salmonicida (strain LFI1238) (Vibrio salmonicida (strain LFI1238)).